We begin with the raw amino-acid sequence, 438 residues long: Serine hydroxymethyltransferase (438 aa).

Residues Leu-119 and Gly-123–Leu-125 each bind (6S)-5,6,7,8-tetrahydrofolate. Position 228 is an N6-(pyridoxal phosphate)lysine (Lys-228). Residue Ser-370–Phe-372 coordinates (6S)-5,6,7,8-tetrahydrofolate.

The protein belongs to the SHMT family. Homodimer. Pyridoxal 5'-phosphate serves as cofactor.

The protein localises to the cytoplasm. It carries out the reaction (6R)-5,10-methylene-5,6,7,8-tetrahydrofolate + glycine + H2O = (6S)-5,6,7,8-tetrahydrofolate + L-serine. Its pathway is one-carbon metabolism; tetrahydrofolate interconversion. It functions in the pathway amino-acid biosynthesis; glycine biosynthesis; glycine from L-serine: step 1/1. Functionally, catalyzes the reversible interconversion of serine and glycine with tetrahydrofolate (THF) serving as the one-carbon carrier. This reaction serves as the major source of one-carbon groups required for the biosynthesis of purines, thymidylate, methionine, and other important biomolecules. Also exhibits THF-independent aldolase activity toward beta-hydroxyamino acids, producing glycine and aldehydes, via a retro-aldol mechanism. The polypeptide is Serine hydroxymethyltransferase (Pelodictyon phaeoclathratiforme (strain DSM 5477 / BU-1)).